A 142-amino-acid chain; its full sequence is Galactose-6-phosphate isomerase subunit LacA (142 aa).

The protein belongs to the LacAB/RpiB family. Heteromultimeric protein consisting of LacA and LacB.

It carries out the reaction aldehydo-D-galactose 6-phosphate = keto-D-tagatose 6-phosphate. Its pathway is carbohydrate metabolism; D-galactose 6-phosphate degradation; D-tagatose 6-phosphate from D-galactose 6-phosphate: step 1/1. In Staphylococcus haemolyticus (strain JCSC1435), this protein is Galactose-6-phosphate isomerase subunit LacA.